A 536-amino-acid chain; its full sequence is ATP synthase subunit beta (536 aa).

Residues 1 to 57 (MVKAVSSSKGAAKVEQKKSAARSGVKKNASKSQASLQDTSSPLKTSSKNAHAKKDVQ) form a disordered region. Residues 30 to 49 (SKSQASLQDTSSPLKTSSKN) show a composition bias toward polar residues. 208–215 (GGAGVGKT) provides a ligand contact to ATP.

The protein belongs to the ATPase alpha/beta chains family. F-type ATPases have 2 components, CF(1) - the catalytic core - and CF(0) - the membrane proton channel. CF(1) has five subunits: alpha(3), beta(3), gamma(1), delta(1), epsilon(1). CF(0) has three main subunits: a(1), b(2) and c(9-12). The alpha and beta chains form an alternating ring which encloses part of the gamma chain. CF(1) is attached to CF(0) by a central stalk formed by the gamma and epsilon chains, while a peripheral stalk is formed by the delta and b chains.

It localises to the cell inner membrane. The catalysed reaction is ATP + H2O + 4 H(+)(in) = ADP + phosphate + 5 H(+)(out). In terms of biological role, produces ATP from ADP in the presence of a proton gradient across the membrane. The catalytic sites are hosted primarily by the beta subunits. This Bartonella quintana (strain Toulouse) (Rochalimaea quintana) protein is ATP synthase subunit beta.